Reading from the N-terminus, the 729-residue chain is Hydroxamate siderophore receptor FhuE (729 aa).

Residues 1 to 36 (MLSTQFNRDNQYQAITKPSLLAGCIALALLPSAAFA) form the signal peptide. Positions 42-49 (ETVIVEGS) match the TonB box motif. Residues 48 to 72 (GSATAPDDGENDYSVTSTSAGTKMQ) form a disordered region. Residues 60-72 (YSVTSTSAGTKMQ) are compositionally biased toward polar residues. Positions 74–183 (TQRDIPQSVT…PSAAINMVRK (110 aa)) constitute a TBDR plug domain. Arg-117, Arg-142, Trp-275, Tyr-357, Asn-373, and Trp-416 together coordinate Fe(III)-coprogen. Residues 189-729 (EFKGDVSAEY…NFSITGTYQF (541 aa)) form the TBDR beta-barrel domain. The short motif at 712–729 (SIVYGTPRNFSITGTYQF) is the TonB C-terminal box element.

The protein belongs to the TonB-dependent receptor family.

It localises to the cell outer membrane. Involved in the active transport across the outer membrane of iron complexed with linear hydroxamate siderophores coprogen, rhodotorulic acid and ferrioxamine B. Binds Fe-coprogen with high affinity, rhodotorulic acid to a lesser extent, and weakly to ferrioxamine B. Selective for planar siderophores. Does not use cyclic siderophores ferrichrome nor ferrioxamine E as substrates. The polypeptide is Hydroxamate siderophore receptor FhuE (Escherichia coli (strain K12)).